Reading from the N-terminus, the 843-residue chain is Glycogen phosphorylase, brain form (843 aa).

A2 bears the N-acetylalanine mark. S15 carries the phosphoserine; by PHK; in form phosphorylase A modification. The AMP site is built by D43, Y197, and R310. Y197 is modified (phosphotyrosine). Y473 is modified (phosphotyrosine). K569 provides a ligand contact to pyridoxal 5'-phosphate. The pyridoxal 5'-phosphate stretch occupies residues 677–678 (TG). K681 carries the N6-(pyridoxal phosphate)lysine modification.

Belongs to the glycogen phosphorylase family. Homodimer. Dimers associate into a tetramer to form the enzymatically active phosphorylase A. The cofactor is pyridoxal 5'-phosphate. Post-translationally, phosphorylated. Phosphorylation of Ser-15 converts phosphorylase B (unphosphorylated) to phosphorylase A.

The enzyme catalyses [(1-&gt;4)-alpha-D-glucosyl](n) + phosphate = [(1-&gt;4)-alpha-D-glucosyl](n-1) + alpha-D-glucose 1-phosphate. With respect to regulation, activity of phosphorylase is controlled both by allosteric means (through the non-covalent binding of metabolites) and by covalent modification. Thus AMP allosterically activates, whereas ATP, ADP, and glucose-6-phosphate allosterically inhibit, phosphorylase B. Activated upon phosphorylation. In terms of biological role, glycogen phosphorylase that regulates glycogen mobilization. Phosphorylase is an important allosteric enzyme in carbohydrate metabolism. Enzymes from different sources differ in their regulatory mechanisms and in their natural substrates. However, all known phosphorylases share catalytic and structural properties. The protein is Glycogen phosphorylase, brain form of Homo sapiens (Human).